A 674-amino-acid polypeptide reads, in one-letter code: Tripartite terminase subunit 3 (674 aa).

The short motif at 212 to 219 (VPRRHGKT) is the Walker A motif element. Residues 305–310 (LLLVDE) carry the Walker B motif motif. Catalysis depends on Glu310, which acts as the For ATPase activity. Residues Asp463 and Glu534 each act as for nuclease activity in the active site. The tract at residues 580 to 600 (GRDKALAVEQFISRFNSGYIK) is required for interaction with UL56 and DNA packaging. Asp651 functions as the For nuclease activity in the catalytic mechanism.

Belongs to the herpesviridae TRM3 protein family. Interacts with the terminase subunits TRM1 and TRM2. Interacts with portal protein.

The protein resides in the host nucleus. Functionally, component of the molecular motor that translocates viral genomic DNA in empty capsid during DNA packaging. Forms a tripartite terminase complex together with TRM1 and TRM2 in the host cytoplasm. Once the complex reaches the host nucleus, it interacts with the capsid portal vertex. This portal forms a ring in which genomic DNA is translocated into the capsid. TRM3 carries an RNase H-like nuclease activity that plays an important role for the cleavage of concatemeric viral DNA into unit length genomes. The polypeptide is Tripartite terminase subunit 3 (Homo sapiens (Human)).